Consider the following 146-residue polypeptide: Shadow of prion protein (146 aa).

A signal peptide spans 1-24 (MRGTSAVCWSLLLLIALLSQNVTA). Asn-94 is a glycosylation site (N-linked (GlcNAc...) asparagine). Ser-108 is lipidated: GPI-anchor amidated serine. A propeptide spans 109 to 146 (GTCPLSSHLSFRLIISIGAILTCSSSSIYVSTKINLGK) (removed in mature form).

This sequence belongs to the SPRN family.

It is found in the cell membrane. Its function is as follows. Prion-like protein that has PrP(C)-like neuroprotective activity. This chain is Shadow of prion protein (sprn), found in Xenopus tropicalis (Western clawed frog).